Reading from the N-terminus, the 226-residue chain is Cell division protein SepF (226 aa).

Positions 20-116 (RAYDDAGYDK…ESLTYHTRDN (97 aa)) are disordered. Residues 22-44 (YDDAGYDKGGYRESRYRSSRYSE) show a composition bias toward basic and acidic residues. The span at 45 to 56 (DFGDEDDEDEEA) shows a compositional bias: acidic residues. Residues 62–95 (RRGDRSRLERAAARSGDVDHNVEGEQPERVERAS) are compositionally biased toward basic and acidic residues. Positions 97–111 (RSITRSAEPSESLTY) are enriched in polar residues.

This sequence belongs to the SepF family. In terms of assembly, homodimer. Interacts with FtsZ.

The protein localises to the cytoplasm. In terms of biological role, cell division protein that is part of the divisome complex and is recruited early to the Z-ring. Probably stimulates Z-ring formation, perhaps through the cross-linking of FtsZ protofilaments. Its function overlaps with FtsA. This chain is Cell division protein SepF, found in Salinispora arenicola (strain CNS-205).